The sequence spans 126 residues: Scygonadin (126 aa).

An N-terminal signal peptide occupies residues 1-24; the sequence is MRSSLLLGLTVVVLLGVIVPPCMA.

Expressed in the ejaculatory ducts of mature males. Not detected in the ejaculatory ducts of immature males. Not detected in hepatopancreas, female reproductive tract, eyes, exoskeleton, subcuticular epithelia, heart, gills, stomach, muscle and hemocytes.

The protein resides in the secreted. Functionally, has antibacterial activity against the Gram-positive bacterium M.luteus with an IC(90) of 125ug/ml. Has weak antibacterial activity against the Gram-negative bacterium A.hydrophila. In Scylla serrata (Mud crab), this protein is Scygonadin.